The following is a 237-amino-acid chain: Large ribosomal subunit protein uL3 (237 aa).

2 disordered regions span residues Ala133–Lys155 and Pro213–Glu237. The span at His135–Arg150 shows a compositional bias: polar residues. An N5-methylglutamine modification is found at Gln151. The segment covering Ala220–Glu237 has biased composition (low complexity).

Belongs to the universal ribosomal protein uL3 family. Part of the 50S ribosomal subunit. Forms a cluster with proteins L14 and L19. Methylated by PrmB.

Its function is as follows. One of the primary rRNA binding proteins, it binds directly near the 3'-end of the 23S rRNA, where it nucleates assembly of the 50S subunit. The protein is Large ribosomal subunit protein uL3 of Brucella canis (strain ATCC 23365 / NCTC 10854 / RM-666).